Consider the following 270-residue polypeptide: Dermonecrotic toxin LhSicTox-alphaIA2aiii (270 aa).

His-2 is a catalytic residue. Mg(2+) is bound by residues Glu-22 and Asp-24. The active-site Nucleophile is His-38. 2 cysteine pairs are disulfide-bonded: Cys-42-Cys-48 and Cys-44-Cys-187. Asp-82 contributes to the Mg(2+) binding site.

This sequence belongs to the arthropod phospholipase D family. Class II subfamily. The cofactor is Mg(2+). As to expression, expressed by the venom gland.

Its subcellular location is the secreted. It carries out the reaction an N-(acyl)-sphingosylphosphocholine = an N-(acyl)-sphingosyl-1,3-cyclic phosphate + choline. The enzyme catalyses an N-(acyl)-sphingosylphosphoethanolamine = an N-(acyl)-sphingosyl-1,3-cyclic phosphate + ethanolamine. The catalysed reaction is a 1-acyl-sn-glycero-3-phosphocholine = a 1-acyl-sn-glycero-2,3-cyclic phosphate + choline. It catalyses the reaction a 1-acyl-sn-glycero-3-phosphoethanolamine = a 1-acyl-sn-glycero-2,3-cyclic phosphate + ethanolamine. Its function is as follows. Dermonecrotic toxins cleave the phosphodiester linkage between the phosphate and headgroup of certain phospholipids (sphingolipid and lysolipid substrates), forming an alcohol (often choline) and a cyclic phosphate. This toxin acts on sphingomyelin (SM). It may also act on ceramide phosphoethanolamine (CPE), lysophosphatidylcholine (LPC) and lysophosphatidylethanolamine (LPE), but not on lysophosphatidylserine (LPS), and lysophosphatidylglycerol (LPG). It acts by transphosphatidylation, releasing exclusively cyclic phosphate products as second products. Induces dermonecrosis, hemolysis, increased vascular permeability, edema, inflammatory response, and platelet aggregation. This Loxosceles hirsuta (Recluse spider) protein is Dermonecrotic toxin LhSicTox-alphaIA2aiii.